The chain runs to 260 residues: Malonyl-[acyl-carrier protein] O-methyltransferase (260 aa).

It belongs to the methyltransferase superfamily.

It carries out the reaction malonyl-[ACP] + S-adenosyl-L-methionine = malonyl-[ACP] methyl ester + S-adenosyl-L-homocysteine. It functions in the pathway cofactor biosynthesis; biotin biosynthesis. Converts the free carboxyl group of a malonyl-thioester to its methyl ester by transfer of a methyl group from S-adenosyl-L-methionine (SAM). It allows to synthesize pimeloyl-ACP via the fatty acid synthetic pathway. The sequence is that of Malonyl-[acyl-carrier protein] O-methyltransferase from Haemophilus influenzae (strain ATCC 51907 / DSM 11121 / KW20 / Rd).